Consider the following 385-residue polypeptide: Probable dual-specificity RNA methyltransferase RlmN (385 aa).

The disordered stretch occupies residues 1-35; the sequence is MNVKEPAEEAAIQLRTERQRIEPEGEEQSEQPTDL. E121 (proton acceptor) is an active-site residue. The Radical SAM core domain occupies 132–367; that stretch reads TRDRVTVCLS…AVIREERGQD (236 aa). C139 and C372 are disulfide-bonded. Positions 146, 150, and 153 each coordinate [4Fe-4S] cluster. S-adenosyl-L-methionine-binding positions include 198–199, S230, 253–255, and N329; these read GE and SLH. The active-site S-methylcysteine intermediate is the C372.

The protein belongs to the radical SAM superfamily. RlmN family. [4Fe-4S] cluster serves as cofactor.

The protein localises to the cytoplasm. The enzyme catalyses adenosine(2503) in 23S rRNA + 2 reduced [2Fe-2S]-[ferredoxin] + 2 S-adenosyl-L-methionine = 2-methyladenosine(2503) in 23S rRNA + 5'-deoxyadenosine + L-methionine + 2 oxidized [2Fe-2S]-[ferredoxin] + S-adenosyl-L-homocysteine. It carries out the reaction adenosine(37) in tRNA + 2 reduced [2Fe-2S]-[ferredoxin] + 2 S-adenosyl-L-methionine = 2-methyladenosine(37) in tRNA + 5'-deoxyadenosine + L-methionine + 2 oxidized [2Fe-2S]-[ferredoxin] + S-adenosyl-L-homocysteine. Specifically methylates position 2 of adenine 2503 in 23S rRNA and position 2 of adenine 37 in tRNAs. The chain is Probable dual-specificity RNA methyltransferase RlmN from Heliobacterium modesticaldum (strain ATCC 51547 / Ice1).